Reading from the N-terminus, the 273-residue chain is Glucosamine-6-phosphate deaminase (273 aa).

Catalysis depends on aspartate 72, which acts as the Proton acceptor; for enolization step. Aspartate 141 acts as the For ring-opening step in catalysis. Histidine 143 serves as the catalytic Proton acceptor; for ring-opening step. Glutamate 148 functions as the For ring-opening step in the catalytic mechanism.

This sequence belongs to the glucosamine/galactosamine-6-phosphate isomerase family. As to quaternary structure, homohexamer.

Its subcellular location is the cytoplasm. It catalyses the reaction alpha-D-glucosamine 6-phosphate + H2O = beta-D-fructose 6-phosphate + NH4(+). It participates in nucleotide-sugar biosynthesis; UDP-N-acetyl-alpha-D-glucosamine biosynthesis; alpha-D-glucosamine 6-phosphate from D-fructose 6-phosphate: step 1/1. In terms of biological role, catalyzes the reversible conversion of alpha-D-glucosamine 6-phosphate (GlcN-6P) into beta-D-fructose 6-phosphate (Fru-6P) and ammonium ion, a regulatory reaction step in de novo uridine diphosphate-N-acetyl-alpha-D-glucosamine (UDP-GlcNAc) biosynthesis via hexosamine pathway. This Anopheles gambiae (African malaria mosquito) protein is Glucosamine-6-phosphate deaminase (Gnpda1).